The chain runs to 864 residues: NT-3 growth factor receptor (864 aa).

An N-terminal signal peptide occupies residues methionine 1–alanine 31. 2 disulfides stabilise this stretch: cysteine 32–cysteine 38 and cysteine 36–cysteine 45. At cysteine 32–threonine 429 the chain is on the extracellular side. 3 N-linked (GlcNAc...) asparagine glycosylation sites follow: asparagine 68, asparagine 72, and asparagine 79. 2 LRR repeats span residues glycine 104 to lysine 125 and histidine 128 to threonine 149. N-linked (GlcNAc...) asparagine glycosylation is found at asparagine 133 and asparagine 163. One can recognise an LRRCT domain in the interval asparagine 160–leucine 209. Cystine bridges form between cysteine 164–cysteine 189 and cysteine 166–cysteine 207. N-linked (GlcNAc...) asparagine glycosylation is found at asparagine 203, asparagine 218, asparagine 232, asparagine 259, asparagine 267, asparagine 272, and asparagine 294. Ig-like C2-type domains are found at residues proline 210–threonine 300 and serine 309–asparagine 382. The cysteines at positions 231 and 284 are disulfide-linked. Cysteine 320 and cysteine 362 are joined by a disulfide. Residues asparagine 375 and asparagine 388 are each glycosylated (N-linked (GlcNAc...) asparagine). Residues phenylalanine 430–isoleucine 453 traverse the membrane as a helical segment. The Cytoplasmic segment spans residues asparagine 454–glycine 864. At serine 493 the chain carries Phosphoserine. Tyrosine 516 bears the Phosphotyrosine; by autocatalysis mark. One can recognise a Protein kinase domain in the interval isoleucine 538 to glycine 853. Residues leucine 544–valine 552 and lysine 572 each bind ATP. The Proton acceptor role is filled by aspartate 679. Tyrosine 705, tyrosine 709, tyrosine 710, and tyrosine 859 each carry phosphotyrosine; by autocatalysis.

The protein belongs to the protein kinase superfamily. Tyr protein kinase family. Insulin receptor subfamily. As to quaternary structure, exists in a dynamic equilibrium between monomeric (low affinity) and dimeric (high affinity) structures. Binds SH2B2. Interacts with SQSTM1 and KIDINS220. Interacts with PTPRS. Interacts with MAPK8IP3/JIP3. Post-translationally, ligand-mediated auto-phosphorylation. In terms of tissue distribution, widely expressed, mainly in the nervous tissue.

The protein resides in the membrane. The catalysed reaction is L-tyrosyl-[protein] + ATP = O-phospho-L-tyrosyl-[protein] + ADP + H(+). Functionally, receptor tyrosine kinase involved in nervous system and probably heart development. Upon binding of its ligand NTF3/neurotrophin-3, NTRK3 autophosphorylates and activates different signaling pathways, including the phosphatidylinositol 3-kinase/AKT and the MAPK pathways, that control cell survival and differentiation. NTRK3 isoforms containing insertions within the kinase domain can autophosphorylate in response to NTF3/neurotrophin-3, but cannot mediate downstream phenotypic responses. This is NT-3 growth factor receptor (Ntrk3) from Rattus norvegicus (Rat).